Reading from the N-terminus, the 463-residue chain is ATP-dependent protease ATPase subunit HslU (463 aa).

Residues Ile-19, 61–66, Asp-277, Glu-341, and Arg-413 contribute to the ATP site; that span reads GVGKTE.

The protein belongs to the ClpX chaperone family. HslU subfamily. A double ring-shaped homohexamer of HslV is capped on each side by a ring-shaped HslU homohexamer. The assembly of the HslU/HslV complex is dependent on binding of ATP.

It localises to the cytoplasm. Functionally, ATPase subunit of a proteasome-like degradation complex; this subunit has chaperone activity. The binding of ATP and its subsequent hydrolysis by HslU are essential for unfolding of protein substrates subsequently hydrolyzed by HslV. HslU recognizes the N-terminal part of its protein substrates and unfolds these before they are guided to HslV for hydrolysis. The polypeptide is ATP-dependent protease ATPase subunit HslU (Bacillus cytotoxicus (strain DSM 22905 / CIP 110041 / 391-98 / NVH 391-98)).